A 111-amino-acid polypeptide reads, in one-letter code: Transcription factor S (111 aa).

The Zn(2+) site is built by Cys4, Cys7, Cys24, Cys27, Cys72, Cys75, Cys100, and Cys103. The segment at 4-27 adopts a C4-type zinc-finger fold; the sequence is CPKCGSMMMPRKENGKTVYKCSKC. A TFIIS-type zinc finger spans residues 68-108; it reads RGISCPSCGNDEAYFWILQTRSADEPATRFYKCTKCGKVWR.

Belongs to the archaeal RpoM/eukaryotic RPA12/RPB9/RPC11 RNA polymerase family.

Functionally, induces RNA cleavage activity in the RNA polymerase. In its presence, the cleavage activity of the RNA polymerase truncates the RNA back to position +15 in a stepwise manner by releasing mainly dinucleotides from the 3'-end of the nascent RNA. The truncated RNAs are able to continue elongation. Involved in transcriptional proofreading and fidelity. Misincorporation of nucleotides during elongation of transcription leads to arrested elongation complexes which are rescued by TFS-promoted removal of a dinucleotide from the 3'-end. TFS is able to induce a cleavage resynthesis cycle in stalled elongation complexes (resulting from the next missing nucleotide or a reduced incorporation rate of a wrong nucleotide) preventing misincorporation and enabling proofreading in a post-incorporation manner. Pausing of elongation complexes is the main determinant of TFS-induced RNA cleavage. The polypeptide is Transcription factor S (Sulfolobus acidocaldarius (strain ATCC 33909 / DSM 639 / JCM 8929 / NBRC 15157 / NCIMB 11770)).